Reading from the N-terminus, the 94-residue chain is Cytochrome b-c1 complex subunit 8 (94 aa).

The Mitochondrial matrix segment spans residues 1–49; the sequence is MGGPHAKAYMGWWGSIGSPAQKGITTYTVSPYAQKPLNNIFHNAVFNTF. The chain crosses the membrane as a helical span at residues 50–80; that stretch reads RRVKSQILYMALPAALYWAWWVNCRDYNAYL. Over 81 to 94 the chain is Mitochondrial intermembrane; it reads YTKAGREELERVNV.

This sequence belongs to the UQCRQ/QCR8 family. Component of the ubiquinol-cytochrome c oxidoreductase (cytochrome b-c1 complex, complex III, CIII), a multisubunit enzyme composed of 3 respiratory subunits cytochrome b, cytochrome c1 and Rieske protein, 2 core protein subunits, and additional low-molecular weight protein subunits. The complex exists as an obligatory dimer and forms supercomplexes (SCs) in the inner mitochondrial membrane with cytochrome c oxidase (complex IV, CIV).

The protein localises to the mitochondrion inner membrane. Its function is as follows. Component of the ubiquinol-cytochrome c oxidoreductase, a multisubunit transmembrane complex that is part of the mitochondrial electron transport chain which drives oxidative phosphorylation. The respiratory chain contains 3 multisubunit complexes succinate dehydrogenase (complex II, CII), ubiquinol-cytochrome c oxidoreductase (cytochrome b-c1 complex, complex III, CIII) and cytochrome c oxidase (complex IV, CIV), that cooperate to transfer electrons derived from NADH and succinate to molecular oxygen, creating an electrochemical gradient over the inner membrane that drives transmembrane transport and the ATP synthase. The cytochrome b-c1 complex catalyzes electron transfer from ubiquinol to cytochrome c, linking this redox reaction to translocation of protons across the mitochondrial inner membrane, with protons being carried across the membrane as hydrogens on the quinol. In the process called Q cycle, 2 protons are consumed from the matrix, 4 protons are released into the intermembrane space and 2 electrons are passed to cytochrome c. The sequence is that of Cytochrome b-c1 complex subunit 8 (QCR8) from Kluyveromyces lactis (strain ATCC 8585 / CBS 2359 / DSM 70799 / NBRC 1267 / NRRL Y-1140 / WM37) (Yeast).